Consider the following 273-residue polypeptide: Hydroxyethylthiazole kinase (273 aa).

Met49 lines the substrate pocket. Residues Lys125 and Thr171 each contribute to the ATP site. Gly198 serves as a coordination point for substrate.

This sequence belongs to the Thz kinase family. Mg(2+) serves as cofactor.

The catalysed reaction is 5-(2-hydroxyethyl)-4-methylthiazole + ATP = 4-methyl-5-(2-phosphooxyethyl)-thiazole + ADP + H(+). It functions in the pathway cofactor biosynthesis; thiamine diphosphate biosynthesis; 4-methyl-5-(2-phosphoethyl)-thiazole from 5-(2-hydroxyethyl)-4-methylthiazole: step 1/1. Catalyzes the phosphorylation of the hydroxyl group of 4-methyl-5-beta-hydroxyethylthiazole (THZ). The protein is Hydroxyethylthiazole kinase of Natranaerobius thermophilus (strain ATCC BAA-1301 / DSM 18059 / JW/NM-WN-LF).